Here is a 440-residue protein sequence, read N- to C-terminus: L-seryl-tRNA(Sec) selenium transferase (440 aa).

The residue at position 282 (Lys282) is an N6-(pyridoxal phosphate)lysine.

It belongs to the SelA family. Pyridoxal 5'-phosphate serves as cofactor.

Its subcellular location is the cytoplasm. It catalyses the reaction L-seryl-tRNA(Sec) + selenophosphate + H(+) = L-selenocysteinyl-tRNA(Sec) + phosphate. It functions in the pathway aminoacyl-tRNA biosynthesis; selenocysteinyl-tRNA(Sec) biosynthesis; selenocysteinyl-tRNA(Sec) from L-seryl-tRNA(Sec) (bacterial route): step 1/1. Converts seryl-tRNA(Sec) to selenocysteinyl-tRNA(Sec) required for selenoprotein biosynthesis. The polypeptide is L-seryl-tRNA(Sec) selenium transferase (Campylobacter jejuni subsp. jejuni serotype O:2 (strain ATCC 700819 / NCTC 11168)).